The primary structure comprises 431 residues: Trigger factor (431 aa).

The PPIase FKBP-type domain occupies 161–245 (TDIVIGDVQK…VKEIKRMELP (85 aa)).

It belongs to the FKBP-type PPIase family. Tig subfamily.

It is found in the cytoplasm. The enzyme catalyses [protein]-peptidylproline (omega=180) = [protein]-peptidylproline (omega=0). Involved in protein export. Acts as a chaperone by maintaining the newly synthesized protein in an open conformation. Functions as a peptidyl-prolyl cis-trans isomerase. This Chloroherpeton thalassium (strain ATCC 35110 / GB-78) protein is Trigger factor.